Here is a 281-residue protein sequence, read N- to C-terminus: Peptidyl-prolyl cis-trans isomerase CYP28, chloroplastic (281 aa).

The transit peptide at 1 to 24 directs the protein to the chloroplast; the sequence is MASSSILIPPILTRRNLLLSTTIA. Residues 66 to 268 enclose the PPIase cyclophilin-type domain; the sequence is STTPCSDSTP…KTVFISGCGE (203 aa).

It belongs to the cyclophilin-type PPIase family. In terms of processing, S-nytrosylated during the hypersensitive disease resistance response. In terms of tissue distribution, ubiquitous. Not detected in roots.

It is found in the plastid. Its subcellular location is the chloroplast. The catalysed reaction is [protein]-peptidylproline (omega=180) = [protein]-peptidylproline (omega=0). PPIases accelerate the folding of proteins. It catalyzes the cis-trans isomerization of proline imidic peptide bonds in oligopeptides. This Arabidopsis thaliana (Mouse-ear cress) protein is Peptidyl-prolyl cis-trans isomerase CYP28, chloroplastic (CYP28).